A 432-amino-acid polypeptide reads, in one-letter code: 3-phosphoshikimate 1-carboxyvinyltransferase (432 aa).

3-phosphoshikimate is bound by residues K25, S26, and R30. A phosphoenolpyruvate-binding site is contributed by K25. Positions 97 and 125 each coordinate phosphoenolpyruvate. Positions 170, 172, 318, and 345 each coordinate 3-phosphoshikimate. Q172 serves as a coordination point for phosphoenolpyruvate. D318 serves as the catalytic Proton acceptor. Residues R349 and R393 each coordinate phosphoenolpyruvate.

The protein belongs to the EPSP synthase family. In terms of assembly, monomer.

The protein localises to the cytoplasm. It catalyses the reaction 3-phosphoshikimate + phosphoenolpyruvate = 5-O-(1-carboxyvinyl)-3-phosphoshikimate + phosphate. Its pathway is metabolic intermediate biosynthesis; chorismate biosynthesis; chorismate from D-erythrose 4-phosphate and phosphoenolpyruvate: step 6/7. In terms of biological role, catalyzes the transfer of the enolpyruvyl moiety of phosphoenolpyruvate (PEP) to the 5-hydroxyl of shikimate-3-phosphate (S3P) to produce enolpyruvyl shikimate-3-phosphate and inorganic phosphate. This is 3-phosphoshikimate 1-carboxyvinyltransferase from Geobacillus thermodenitrificans (strain NG80-2).